A 605-amino-acid polypeptide reads, in one-letter code: Elongation factor 4 (605 aa).

The region spanning 9 to 192 (SRTRNFCIIA…AIIARIPSPK (184 aa)) is the tr-type G domain. GTP contacts are provided by residues 21 to 26 (DHGKST) and 139 to 142 (NKID).

Belongs to the TRAFAC class translation factor GTPase superfamily. Classic translation factor GTPase family. LepA subfamily.

The protein resides in the cell inner membrane. The catalysed reaction is GTP + H2O = GDP + phosphate + H(+). Its function is as follows. Required for accurate and efficient protein synthesis under certain stress conditions. May act as a fidelity factor of the translation reaction, by catalyzing a one-codon backward translocation of tRNAs on improperly translocated ribosomes. Back-translocation proceeds from a post-translocation (POST) complex to a pre-translocation (PRE) complex, thus giving elongation factor G a second chance to translocate the tRNAs correctly. Binds to ribosomes in a GTP-dependent manner. The chain is Elongation factor 4 from Chlorobium limicola (strain DSM 245 / NBRC 103803 / 6330).